Here is a 750-residue protein sequence, read N- to C-terminus: Photosystem I P700 chlorophyll a apoprotein A1 (750 aa).

Helical transmembrane passes span 70–93 (VFSA…FHGA), 156–179 (LYCT…FHYH), 195–219 (LNHH…HVSL), 291–309 (IAHH…GHMY), 346–369 (WHAQ…HHMY), 385–411 (LSLF…IFMV), 433–455 (AIIS…LYIH), and 531–549 (FLVH…LILL). The [4Fe-4S] cluster site is built by C573 and C582. 2 consecutive transmembrane segments (helical) span residues 589 to 610 (HVFL…HFSW) and 664 to 686 (LSAY…MFLF). H675 serves as a coordination point for chlorophyll a'. Positions 683 and 691 each coordinate chlorophyll a. W692 is a phylloquinone binding site. The chain crosses the membrane as a helical span at residues 724 to 744 (AVGVTHYLLGGIATTWAFFLA).

The protein belongs to the PsaA/PsaB family. As to quaternary structure, the PsaA/B heterodimer binds the P700 chlorophyll special pair and subsequent electron acceptors. PSI consists of a core antenna complex that captures photons, and an electron transfer chain that converts photonic excitation into a charge separation. The eukaryotic PSI reaction center is composed of at least 11 subunits. P700 is a chlorophyll a/chlorophyll a' dimer, A0 is one or more chlorophyll a, A1 is one or both phylloquinones and FX is a shared 4Fe-4S iron-sulfur center. serves as cofactor.

The protein localises to the plastid. It is found in the chloroplast thylakoid membrane. The enzyme catalyses reduced [plastocyanin] + hnu + oxidized [2Fe-2S]-[ferredoxin] = oxidized [plastocyanin] + reduced [2Fe-2S]-[ferredoxin]. Its function is as follows. PsaA and PsaB bind P700, the primary electron donor of photosystem I (PSI), as well as the electron acceptors A0, A1 and FX. PSI is a plastocyanin-ferredoxin oxidoreductase, converting photonic excitation into a charge separation, which transfers an electron from the donor P700 chlorophyll pair to the spectroscopically characterized acceptors A0, A1, FX, FA and FB in turn. Oxidized P700 is reduced on the lumenal side of the thylakoid membrane by plastocyanin. The sequence is that of Photosystem I P700 chlorophyll a apoprotein A1 from Jasminum nudiflorum (Winter jasmine).